A 264-amino-acid chain; its full sequence is 4-hydroxy-tetrahydrodipicolinate reductase (264 aa).

8–13 is an NAD(+) binding site; that stretch reads GPRGKM. Lys-36 serves as a coordination point for NADP(+). NAD(+)-binding positions include 97 to 99 and 123 to 126; these read GTT and APNF. Residue His-153 is the Proton donor/acceptor of the active site. His-154 contributes to the (S)-2,3,4,5-tetrahydrodipicolinate binding site. Lys-157 (proton donor) is an active-site residue. Residue 163–164 coordinates (S)-2,3,4,5-tetrahydrodipicolinate; the sequence is GT.

It belongs to the DapB family.

The protein localises to the cytoplasm. The enzyme catalyses (S)-2,3,4,5-tetrahydrodipicolinate + NAD(+) + H2O = (2S,4S)-4-hydroxy-2,3,4,5-tetrahydrodipicolinate + NADH + H(+). The catalysed reaction is (S)-2,3,4,5-tetrahydrodipicolinate + NADP(+) + H2O = (2S,4S)-4-hydroxy-2,3,4,5-tetrahydrodipicolinate + NADPH + H(+). The protein operates within amino-acid biosynthesis; L-lysine biosynthesis via DAP pathway; (S)-tetrahydrodipicolinate from L-aspartate: step 4/4. Functionally, catalyzes the conversion of 4-hydroxy-tetrahydrodipicolinate (HTPA) to tetrahydrodipicolinate. The sequence is that of 4-hydroxy-tetrahydrodipicolinate reductase from Halalkalibacterium halodurans (strain ATCC BAA-125 / DSM 18197 / FERM 7344 / JCM 9153 / C-125) (Bacillus halodurans).